The chain runs to 1025 residues: Error-prone DNA polymerase (1025 aa).

It belongs to the DNA polymerase type-C family. DnaE2 subfamily.

Its subcellular location is the cytoplasm. The enzyme catalyses DNA(n) + a 2'-deoxyribonucleoside 5'-triphosphate = DNA(n+1) + diphosphate. Its function is as follows. DNA polymerase involved in damage-induced mutagenesis and translesion synthesis (TLS). It is not the major replicative DNA polymerase. This chain is Error-prone DNA polymerase, found in Pseudomonas fluorescens (strain Pf0-1).